The chain runs to 553 residues: Putative transport protein AHA_3492 (553 aa).

Transmembrane regions (helical) follow at residues 4 to 24 (IALS…LGNW), 29 to 49 (VGLG…FAGL), 65 to 85 (FGLI…FFSS), 95 to 115 (GFAA…HQLF), and 158 to 178 (MGYA…MWLI). 2 consecutive RCK C-terminal domains span residues 191 to 276 (AQFE…VLGE) and 279 to 361 (ETSL…VVGN). A run of 6 helical transmembrane segments spans residues 371-391 (MLPV…PFYL), 403-425 (AGGP…LYWF), 439-459 (IVLF…DTLI), 465-485 (AWMM…GVLA), 493-513 (YLTL…LAFA), and 533-553 (LVMF…WAGA).

This sequence belongs to the AAE transporter (TC 2.A.81) family. YidE subfamily.

It is found in the cell membrane. This Aeromonas hydrophila subsp. hydrophila (strain ATCC 7966 / DSM 30187 / BCRC 13018 / CCUG 14551 / JCM 1027 / KCTC 2358 / NCIMB 9240 / NCTC 8049) protein is Putative transport protein AHA_3492.